We begin with the raw amino-acid sequence, 121 residues long: Alpha-endosulfine (121 aa).

The interval 1–53 (MSQKQEEENPAEETGEEKQDTQEKEGILPEKAEEAKLKAKYPSLGQKPGGSDF) is disordered. Ser-2 is modified (N-acetylserine). Phosphoserine is present on Ser-2. Positions 16–37 (EEKQDTQEKEGILPEKAEEAKL) are enriched in basic and acidic residues. Phosphothreonine is present on Thr-21. The residue at position 43 (Ser-43) is a Phosphoserine. Position 67 is a phosphoserine; by GWL (Ser-67). Residues 79–121 (NKQLPSAGPDKNLVTGDHIPTPQDLPQRKSSLVTSKLAGGQVE) are disordered. Ser-109 carries the post-translational modification Phosphoserine; by PKA.

Belongs to the endosulfine family. Interacts (when phosphorylated at Ser-67) with PPP2R2D. Interacts with ABCC8. Interacts with SNCA; interaction is disrupted when phosphorylated at Ser-109. In terms of processing, phosphorylation at Ser-67 by GWL during mitosis is essential for interaction with PPP2R2D (PR55-delta) and subsequent inactivation of PP2A. Phosphorylated by PKA.

It localises to the cytoplasm. Its function is as follows. Protein phosphatase inhibitor that specifically inhibits protein phosphatase 2A (PP2A) during mitosis. When phosphorylated at Ser-67 during mitosis, specifically interacts with PPP2R2D (PR55-delta) and inhibits its activity, leading to inactivation of PP2A, an essential condition to keep cyclin-B1-CDK1 activity high during M phase. Also acts as a stimulator of insulin secretion by interacting with sulfonylurea receptor (ABCC8), thereby preventing sulfonylurea from binding to its receptor and reducing K(ATP) channel currents. This is Alpha-endosulfine (ENSA) from Bos taurus (Bovine).